The following is a 654-amino-acid chain: Chaperone protein DnaK (654 aa).

A Phosphothreonine; by autocatalysis modification is found at Thr205. The segment at 592–654 (ELERQMQQIG…EVEILDDKKP (63 aa)) is disordered. The span at 608–621 (AGQSETQSTGPGSY) shows a compositional bias: polar residues. Residues 622–636 (QESSNQSSQHQTNNN) show a composition bias toward low complexity.

Belongs to the heat shock protein 70 family.

Acts as a chaperone. This chain is Chaperone protein DnaK, found in Protochlamydia amoebophila (strain UWE25).